The chain runs to 382 residues: Galactokinase (382 aa).

Residue 34–37 (EHTD) coordinates substrate. 124–130 (GAGLSSS) serves as a coordination point for ATP. Serine 130 and glutamate 162 together coordinate Mg(2+). Aspartate 174 serves as the catalytic Proton acceptor. Tyrosine 223 is a binding site for substrate.

The protein belongs to the GHMP kinase family. GalK subfamily.

The protein localises to the cytoplasm. The enzyme catalyses alpha-D-galactose + ATP = alpha-D-galactose 1-phosphate + ADP + H(+). It participates in carbohydrate metabolism; galactose metabolism. In terms of biological role, catalyzes the transfer of the gamma-phosphate of ATP to D-galactose to form alpha-D-galactose-1-phosphate (Gal-1-P). The chain is Galactokinase from Escherichia coli (strain SMS-3-5 / SECEC).